The primary structure comprises 149 residues: 3-dehydroquinate dehydratase (149 aa).

Catalysis depends on Y26, which acts as the Proton acceptor. 3 residues coordinate substrate: N77, H83, and D90. The active-site Proton donor is H103. Residues 104-105 (LS) and R114 contribute to the substrate site.

Belongs to the type-II 3-dehydroquinase family. Homododecamer.

The enzyme catalyses 3-dehydroquinate = 3-dehydroshikimate + H2O. Its pathway is metabolic intermediate biosynthesis; chorismate biosynthesis; chorismate from D-erythrose 4-phosphate and phosphoenolpyruvate: step 3/7. In terms of biological role, catalyzes a trans-dehydration via an enolate intermediate. This Haemophilus influenzae (strain ATCC 51907 / DSM 11121 / KW20 / Rd) protein is 3-dehydroquinate dehydratase (aroQ).